A 439-amino-acid chain; its full sequence is ATP-dependent protease ATPase subunit HslU (439 aa).

Residues Ile-17, 59 to 64 (GVGKTE), Asp-251, Glu-317, and Arg-389 each bind ATP.

Belongs to the ClpX chaperone family. HslU subfamily. As to quaternary structure, a double ring-shaped homohexamer of HslV is capped on each side by a ring-shaped HslU homohexamer. The assembly of the HslU/HslV complex is dependent on binding of ATP.

Its subcellular location is the cytoplasm. ATPase subunit of a proteasome-like degradation complex; this subunit has chaperone activity. The binding of ATP and its subsequent hydrolysis by HslU are essential for unfolding of protein substrates subsequently hydrolyzed by HslV. HslU recognizes the N-terminal part of its protein substrates and unfolds these before they are guided to HslV for hydrolysis. This chain is ATP-dependent protease ATPase subunit HslU, found in Campylobacter jejuni subsp. doylei (strain ATCC BAA-1458 / RM4099 / 269.97).